A 270-amino-acid chain; its full sequence is Oxidoreductase NAD-binding domain-containing protein 1 (270 aa).

One can recognise an FAD-binding FR-type domain in the interval 20 to 123 (MELFSARVCD…VGGNFYFDPQ (104 aa)). An NAD(+)-binding site is contributed by 137–142 (GVGINP).

In Danio rerio (Zebrafish), this protein is Oxidoreductase NAD-binding domain-containing protein 1 (oxnad1).